Reading from the N-terminus, the 259-residue chain is TCF3 fusion partner homolog (259 aa).

Disordered regions lie at residues 50-72 (GGLGDSGLRERDEEEEAARGRRR) and 141-210 (EDDG…APVQ). A Phosphoserine modification is found at S167. A compositionally biased stretch (polar residues) spans 167–178 (SPSQRTTATLDP). At T172 the chain carries Phosphothreonine. Residues S180 and S188 each carry the phosphoserine modification. At T203 the chain carries Phosphothreonine. Residue K222 forms a Glycyl lysine isopeptide (Lys-Gly) (interchain with G-Cter in SUMO2) linkage. S255 is modified (phosphoserine).

Interacts with NOL3; translocates NOL3 into the nucleus and negatively regulated TFPT-induced cell death. Component of the chromatin remodeling INO80 complex; specifically part of a complex module associated with the N-terminus of INO80.

It localises to the nucleus. Functionally, appears to promote apoptosis in a p53/TP53-independent manner. Putative regulatory component of the chromatin remodeling INO80 complex which is involved in transcriptional regulation, DNA replication and probably DNA repair. This is TCF3 fusion partner homolog (Tfpt) from Mus musculus (Mouse).